The sequence spans 307 residues: N-acetylmuramic acid 6-phosphate etherase (307 aa).

The 164-residue stretch at 62–225 folds into the SIS domain; the sequence is IVSSFNRGGR…STASMIRIGK (164 aa). Glu90 functions as the Proton donor in the catalytic mechanism. Glu121 is a catalytic residue.

Belongs to the GCKR-like family. MurNAc-6-P etherase subfamily. As to quaternary structure, homodimer.

It carries out the reaction N-acetyl-D-muramate 6-phosphate + H2O = N-acetyl-D-glucosamine 6-phosphate + (R)-lactate. It functions in the pathway amino-sugar metabolism; 1,6-anhydro-N-acetylmuramate degradation. It participates in amino-sugar metabolism; N-acetylmuramate degradation. Its pathway is cell wall biogenesis; peptidoglycan recycling. Specifically catalyzes the cleavage of the D-lactyl ether substituent of MurNAc 6-phosphate, producing GlcNAc 6-phosphate and D-lactate. Together with AnmK, is also required for the utilization of anhydro-N-acetylmuramic acid (anhMurNAc) either imported from the medium or derived from its own cell wall murein, and thus plays a role in cell wall recycling. This chain is N-acetylmuramic acid 6-phosphate etherase, found in Pseudoalteromonas atlantica (strain T6c / ATCC BAA-1087).